The chain runs to 177 residues: VQ motif-containing protein 11 (177 aa).

A VQ motif is present at residues 25 to 34; it reads FRNIVQKLTG. S43, S99, S115, S142, and S145 each carry phosphoserine. The segment covering 115-133 has biased composition (basic and acidic residues); sequence SAREEHHAQPDKEEQKAIA. The segment at 115-177 is disordered; that stretch reads SAREEHHAQP…RIHEDNHRDS (63 aa). Positions 148–159 are enriched in low complexity; it reads EPAPELLPLFPL. S161 carries the post-translational modification Phosphoserine. Over residues 168–177 the composition is skewed to basic and acidic residues; the sequence is RIHEDNHRDS.

In terms of processing, phosphorylated on serine residues by MPK6.

It localises to the nucleus. In terms of biological role, may modulate WRKY transcription factor activities. In Arabidopsis thaliana (Mouse-ear cress), this protein is VQ motif-containing protein 11.